The primary structure comprises 323 residues: Voltage-dependent calcium channel gamma-2 subunit (323 aa).

Residues 10 to 30 (MLLTTVGAFAAFSLMTIAVGT) form a helical membrane-spanning segment. A glycan (N-linked (GlcNAc...) asparagine) is linked at Asn48. 3 helical membrane passes run 104–124 (SSIF…CIAA), 134–154 (IILS…IGII), and 182–202 (FGAL…HMFI). The interval 233–261 (YQRRSRSSSRSTEPSHSRDASPVGVKGFN) is disordered. Ser253 bears the Phosphoserine mark. The residue at position 271 (Tyr271) is a Phosphotyrosine. Thr321 is subject to Phosphothreonine; by PKA.

Belongs to the PMP-22/EMP/MP20 family. CACNG subfamily. In terms of assembly, the L-type calcium channel is composed of five subunits: alpha-1, alpha-2/delta, beta and gamma. Interacts with the PDZ domains of DLG4/PSD-95 and DLG1/SAP97. May interact with GOPC. Acts as an auxiliary subunit for AMPA-selective glutamate receptors (AMPARs). Found in a complex with GRIA1, GRIA2, GRIA3, GRIA4, CNIH2, CNIH3, CACNG3, CACNG4, CACNG5, CACNG7 and CACNG8. Interacts with GRIA1 and GRIA2. Interacts with MPP2. Phosphorylation of Thr-321 by PKA impairs interaction with DLG1 and DLG4. As to expression, brain.

Its subcellular location is the membrane. The protein resides in the synapse. It is found in the synaptosome. Its function is as follows. Regulates the trafficking and gating properties of AMPA-selective glutamate receptors (AMPARs). Promotes their targeting to the cell membrane and synapses and modulates their gating properties by slowing their rates of activation, deactivation and desensitization. Does not show subunit-specific AMPA receptor regulation and regulates all AMPAR subunits. Thought to stabilize the calcium channel in an inactivated (closed) state. In Mus musculus (Mouse), this protein is Voltage-dependent calcium channel gamma-2 subunit (Cacng2).